The primary structure comprises 700 residues: Autophagy-related protein 13 (700 aa).

Residues 319-352 (GSINSSSSPPPGATQSNQSVSSFSTSKPIPVTLN) are disordered. Residues 332–344 (TQSNQSVSSFSTS) show a composition bias toward low complexity. The segment at 399–407 (SSFGSRFRT) is ATG17-binding. The ATG1-binding stretch occupies residues 428 to 487 (TPNNPILHNFRSRNKSPSVSSTELGPSSSIYMDDDLDSFMKMLDSKPDLRFPSNSPSVYE). The segment covering 506 to 532 (EQQQHGSPSSNQIMIHSQSQTSQSQVF) has biased composition (polar residues). Disordered stretches follow at residues 506 to 562 (EQQQ…PGVS), 576 to 637 (HASS…NPEL), and 649 to 700 (ESDD…NQEF). Over residues 595 to 631 (SSPPASATAVATVHNSLRRLTSSSQRTNTNSTNSSTR) the composition is skewed to low complexity. The segment covering 656–667 (DEHSPRSTDTKS) has biased composition (basic and acidic residues).

The protein belongs to the ATG13 family. Fungi subfamily. As to quaternary structure, hypophosphorylated form interacts with ATG1 to form the ATG1-ATG13 kinase complex. The ATG1-ATG13 complex interacts with the ATG17-ATG29-ATG31 complex through direct interaction with ATG17. Interacts with VAC8.

The protein localises to the cytoplasm. The protein resides in the preautophagosomal structure. Functionally, activates the ATG1 kinase in a nutritional condition dependent manner through the TOR pathway, leading to autophagy. Involved in ATG9 and ATG23 cycling through the pre-autophagosomal structure. Also involved in cytoplasm to vacuole transport (Cvt) and more specifically in Cvt vesicle formation. Seems to play a role in the switching machinery regulating the conversion between the Cvt pathway and autophagy. Finally, ATG13 is also required for glycogen storage during stationary phase. In terms of biological role, acts as a negative regulator of xylose alcoholic fermentation, a role that is not related to autophagy. In Ogataea parapolymorpha (strain ATCC 26012 / BCRC 20466 / JCM 22074 / NRRL Y-7560 / DL-1) (Yeast), this protein is Autophagy-related protein 13.